The primary structure comprises 733 residues: 1,4-alpha-glucan branching enzyme GlgB (733 aa).

The active-site Nucleophile is D413. Residue E466 is the Proton donor of the active site.

It belongs to the glycosyl hydrolase 13 family. GlgB subfamily. In terms of assembly, monomer.

The catalysed reaction is Transfers a segment of a (1-&gt;4)-alpha-D-glucan chain to a primary hydroxy group in a similar glucan chain.. It functions in the pathway glycan biosynthesis; glycogen biosynthesis. Its function is as follows. Catalyzes the formation of the alpha-1,6-glucosidic linkages in glycogen by scission of a 1,4-alpha-linked oligosaccharide from growing alpha-1,4-glucan chains and the subsequent attachment of the oligosaccharide to the alpha-1,6 position. In Leifsonia xyli subsp. xyli (strain CTCB07), this protein is 1,4-alpha-glucan branching enzyme GlgB.